An 86-amino-acid polypeptide reads, in one-letter code: Muscarinic toxin 38 (86 aa).

Positions 1–21 (MKTLLLTLVVVTIVCLDLGYT) are cleaved as a signal peptide. 4 cysteine pairs are disulfide-bonded: C24-C45, C38-C63, C67-C78, and C79-C84.

It belongs to the three-finger toxin family. Short-chain subfamily. Aminergic toxin sub-subfamily. As to quaternary structure, monomer. Expressed by the venom gland.

It is found in the secreted. Functionally, binds to the muscarinic acetylcholine receptor (CHRM). The protein is Muscarinic toxin 38 of Ophiophagus hannah (King cobra).